A 133-amino-acid polypeptide reads, in one-letter code: Acyl-CoA thioester hydrolase YciA (133 aa).

Residues 8–123 enclose the HotDog ACOT-type domain; sequence PQGELVLRTL…LFIYVAVDPD (116 aa).

Belongs to the acyl coenzyme A hydrolase family.

Catalyzes the hydrolysis of the thioester bond in palmitoyl-CoA and malonyl-CoA. The protein is Acyl-CoA thioester hydrolase YciA (yciA) of Salmonella typhi.